The sequence spans 1577 residues: Dynamin-binding protein (1577 aa).

The residue at position 1 (Met1) is an N-acetylmethionine. SH3 domains lie at 2 to 61, 66 to 126, 145 to 204, and 243 to 302; these read EAGS…IVTI, EGER…ELCL, YSMG…LLGP, and EPGT…LCPD. 2 disordered regions span residues 211 to 244 and 335 to 395; these read SVSSGNQDDCIVNGEVDTPVGEEEIGPDEDEEEP and EEQR…WEMP. Residues 230 to 244 show a composition bias toward acidic residues; that stretch reads VGEEEIGPDEDEEEP. Residues 335-344 show a composition bias toward basic and acidic residues; the sequence is EEQRHETSDH. The residue at position 496 (Ser496) is a Phosphoserine. Disordered regions lie at residues 591 to 624 and 639 to 659; these read GSSKLITEQELPERRKALRPPPPRPCTPVSTSPH and VRPSRPAPLPPSAQQRTNAVS. A compositionally biased stretch (pro residues) spans 639 to 649; sequence VRPSRPAPLPP. Ser684 is modified (phosphoserine). The stretch at 693–757 forms a coiled coil; the sequence is LVLVRIEEME…ELQQLREMTL (65 aa). The region spanning 784–967 is the DH domain; sequence KRAKVIEELL…KEINVNINEY (184 aa). The region spanning 1008 to 1217 is the BAR domain; it reads LKHLTGFAPQ…LKVAGREGNL (210 aa). Positions 1136–1173 form a coiled coil; it reads ERAEKLKDKKTLEELQSARNNYEALNAQLLDELPKFHQ. In terms of domain architecture, SH3 5 spans 1285–1348; sequence PPEKLFQAER…YSSFLKPYNP (64 aa). Residues 1348–1487 form a disordered region; the sequence is PRRSHSDASV…SVPGRNGQSQ (140 aa). Polar residues predominate over residues 1376–1405; sequence RQNSGSTLTFNPSSMAVSFTSGSCQKQPQD. The span at 1419–1442 shows a compositional bias: low complexity; it reads SASLNPSNSESSPSRCPSDPDSTS. The SH3 6 domain maps to 1513 to 1576; that stretch reads EGNQVYFAVY…PSNYIRKTEY (64 aa).

Binds DNM1 via its N-terminal SH3 domains. The C-terminal SH3 domain binds a complex containing actin, tubulin, Hsp70 and actin-regulatory proteins, such as ENAH, EVL, WIRE, CR16, WAVE1 and NAP1L1. Interacts with FASLG. Interacts (via SH3 domain 6) with WASL. Interacts (via SH3 domain 6) interacts with ENAH. Interacts (via C-terminal domain) with TJP1; required for the apical cell-cell junction localization of DNMBP. In terms of assembly, (Microbial infection) Interacts (via SH3 domain 6) with L.monocytogenes InlC. Detected in heart, brain, lung, liver, skeletal muscle, kidney and pancreas.

Its subcellular location is the cytoplasm. It localises to the golgi apparatus. It is found in the golgi stack. The protein resides in the cytoskeleton. The protein localises to the synapse. Its subcellular location is the cell junction. In terms of biological role, plays a critical role as a guanine nucleotide exchange factor (GEF) for CDC42 in several intracellular processes associated with the actin and microtubule cytoskeleton. Regulates the structure of apical junctions through F-actin organization in epithelial cells. Participates in the normal lumenogenesis of epithelial cell cysts by regulating spindle orientation. Plays a role in ciliogenesis. May play a role in membrane trafficking between the cell surface and the Golgi. This Homo sapiens (Human) protein is Dynamin-binding protein.